A 671-amino-acid chain; its full sequence is UvrABC system protein B (671 aa).

The 388-residue stretch at 25-412 (EGIEAGLAHQ…AGRVVEQVVR (388 aa)) folds into the Helicase ATP-binding domain. 38-45 (GVTGSGKT) contributes to the ATP binding site. Positions 91 to 114 (YYDYYQPEAYVPSSDTFIEKDASI) match the Beta-hairpin motif. Residues 429–582 (QVDDLLSEIT…QIAFNLANGI (154 aa)) form the Helicase C-terminal domain. Positions 601 to 623 (PGSRSKKRKGMAKAAEENARYEN) are disordered. The span at 614–623 (AAEENARYEN) shows a compositional bias: basic and acidic residues. A UVR domain is found at 632–667 (TKRIRQLEEKMYQLARDLEFEAAAQMRDEITKLRER).

This sequence belongs to the UvrB family. In terms of assembly, forms a heterotetramer with UvrA during the search for lesions. Interacts with UvrC in an incision complex.

The protein resides in the cytoplasm. Functionally, the UvrABC repair system catalyzes the recognition and processing of DNA lesions. A damage recognition complex composed of 2 UvrA and 2 UvrB subunits scans DNA for abnormalities. Upon binding of the UvrA(2)B(2) complex to a putative damaged site, the DNA wraps around one UvrB monomer. DNA wrap is dependent on ATP binding by UvrB and probably causes local melting of the DNA helix, facilitating insertion of UvrB beta-hairpin between the DNA strands. Then UvrB probes one DNA strand for the presence of a lesion. If a lesion is found the UvrA subunits dissociate and the UvrB-DNA preincision complex is formed. This complex is subsequently bound by UvrC and the second UvrB is released. If no lesion is found, the DNA wraps around the other UvrB subunit that will check the other stand for damage. The chain is UvrABC system protein B from Pseudomonas fluorescens (strain ATCC BAA-477 / NRRL B-23932 / Pf-5).